Reading from the N-terminus, the 89-residue chain is Glutamyl-tRNA(Gln) amidotransferase subunit C (89 aa).

Belongs to the GatC family. In terms of assembly, heterotrimer of A, B and C subunits.

The catalysed reaction is L-glutamyl-tRNA(Gln) + L-glutamine + ATP + H2O = L-glutaminyl-tRNA(Gln) + L-glutamate + ADP + phosphate + H(+). It catalyses the reaction L-aspartyl-tRNA(Asn) + L-glutamine + ATP + H2O = L-asparaginyl-tRNA(Asn) + L-glutamate + ADP + phosphate + 2 H(+). Allows the formation of correctly charged Asn-tRNA(Asn) or Gln-tRNA(Gln) through the transamidation of misacylated Asp-tRNA(Asn) or Glu-tRNA(Gln) in organisms which lack either or both of asparaginyl-tRNA or glutaminyl-tRNA synthetases. The reaction takes place in the presence of glutamine and ATP through an activated phospho-Asp-tRNA(Asn) or phospho-Glu-tRNA(Gln). The protein is Glutamyl-tRNA(Gln) amidotransferase subunit C of Thermus thermophilus (strain ATCC 27634 / DSM 579 / HB8).